The chain runs to 484 residues: 1,3-beta-glucanosyltransferase GAS5 (484 aa).

Positions Met1–Ala19 are cleaved as a signal peptide. 2 N-linked (GlcNAc...) asparagine glycosylation sites follow: Asn24 and Asn60. Cys71 and Cys100 are oxidised to a cystine. Positions 89, 159, and 160 each coordinate (1,3-beta-D-glucosyl)n. Glu160 (proton donor) is an active-site residue. Asn166 carries N-linked (GlcNAc...) asparagine glycosylation. Positions 201 and 206 each coordinate (1,3-beta-D-glucosyl)n. 2 cysteine pairs are disulfide-bonded: Cys215–Cys348 and Cys234–Cys265. Residue Glu262 is the Nucleophile of the active site. Tyr295 serves as a coordination point for (1,3-beta-D-glucosyl)n. Asn299, Asn344, and Asn359 each carry an N-linked (GlcNAc...) asparagine glycan. The disordered stretch occupies residues Thr383 to Gly462. Residues Lys394–Thr404 are compositionally biased toward acidic residues. Positions Ser405 to Gly462 are enriched in low complexity. Residue Gly462 is the site of GPI-anchor amidated glycine attachment. Residues Ala463 to Leu484 constitute a propeptide, removed in mature form.

It belongs to the glycosyl hydrolase 72 family. The GPI-anchor is attached to the protein in the endoplasmic reticulum and serves to target the protein to the cell surface. There, the glucosamine-inositol phospholipid moiety is cleaved off and the GPI-modified mannoprotein is covalently attached via its lipidless GPI glycan remnant to the 1,6-beta-glucan of the outer cell wall layer.

It is found in the secreted. The protein localises to the cell wall. It localises to the membrane. Its function is as follows. Splits internally a 1,3-beta-glucan molecule and transfers the newly generated reducing end (the donor) to the non-reducing end of another 1,3-beta-glucan molecule (the acceptor) forming a 1,3-beta linkage, resulting in the elongation of 1,3-beta-glucan chains in the cell wall. Involved in cell wall biosynthesis and morphogenesis. The sequence is that of 1,3-beta-glucanosyltransferase GAS5 (GAS5) from Saccharomyces cerevisiae (strain ATCC 204508 / S288c) (Baker's yeast).